The chain runs to 361 residues: Phosphoserine aminotransferase (361 aa).

Position 43 (Arg-43) interacts with L-glutamate. Residues 77–78, Trp-103, Thr-153, Asp-173, and Gln-196 contribute to the pyridoxal 5'-phosphate site; that span reads AS. Lys-197 carries the post-translational modification N6-(pyridoxal phosphate)lysine. A pyridoxal 5'-phosphate-binding site is contributed by 238 to 239; that stretch reads NT.

It belongs to the class-V pyridoxal-phosphate-dependent aminotransferase family. SerC subfamily. In terms of assembly, homodimer. It depends on pyridoxal 5'-phosphate as a cofactor.

It is found in the cytoplasm. It carries out the reaction O-phospho-L-serine + 2-oxoglutarate = 3-phosphooxypyruvate + L-glutamate. It catalyses the reaction 4-(phosphooxy)-L-threonine + 2-oxoglutarate = (R)-3-hydroxy-2-oxo-4-phosphooxybutanoate + L-glutamate. Its pathway is amino-acid biosynthesis; L-serine biosynthesis; L-serine from 3-phospho-D-glycerate: step 2/3. It functions in the pathway cofactor biosynthesis; pyridoxine 5'-phosphate biosynthesis; pyridoxine 5'-phosphate from D-erythrose 4-phosphate: step 3/5. In terms of biological role, catalyzes the reversible conversion of 3-phosphohydroxypyruvate to phosphoserine and of 3-hydroxy-2-oxo-4-phosphonooxybutanoate to phosphohydroxythreonine. This chain is Phosphoserine aminotransferase, found in Stutzerimonas stutzeri (Pseudomonas stutzeri).